The chain runs to 476 residues: Sulfate adenylyltransferase subunit 1 (476 aa).

Residues 24–239 (KSMLRFLTCG…VLENVDIDQK (216 aa)) enclose the tr-type G domain. Residues 33 to 40 (GSVDDGKS) form a G1 region. 33-40 (GSVDDGKS) lines the GTP pocket. The G2 stretch occupies residues 91–95 (GITID). The tract at residues 112–115 (DTPG) is G3. Residues 112–116 (DTPGH) and 167–170 (NKMD) contribute to the GTP site. The tract at residues 167–170 (NKMD) is G4. The G5 stretch occupies residues 205–207 (SAL).

The protein belongs to the TRAFAC class translation factor GTPase superfamily. Classic translation factor GTPase family. CysN/NodQ subfamily. As to quaternary structure, heterodimer composed of CysD, the smaller subunit, and CysN.

It catalyses the reaction sulfate + ATP + H(+) = adenosine 5'-phosphosulfate + diphosphate. Its pathway is sulfur metabolism; hydrogen sulfide biosynthesis; sulfite from sulfate: step 1/3. Functionally, with CysD forms the ATP sulfurylase (ATPS) that catalyzes the adenylation of sulfate producing adenosine 5'-phosphosulfate (APS) and diphosphate, the first enzymatic step in sulfur assimilation pathway. APS synthesis involves the formation of a high-energy phosphoric-sulfuric acid anhydride bond driven by GTP hydrolysis by CysN coupled to ATP hydrolysis by CysD. The polypeptide is Sulfate adenylyltransferase subunit 1 (Vibrio atlanticus (strain LGP32) (Vibrio splendidus (strain Mel32))).